The sequence spans 433 residues: Methylenetetrahydrofolate--tRNA-(uracil-5-)-methyltransferase TrmFO (433 aa).

7–12 lines the FAD pocket; that stretch reads GGGLAG.

Belongs to the MnmG family. TrmFO subfamily. FAD serves as cofactor.

The protein localises to the cytoplasm. It carries out the reaction uridine(54) in tRNA + (6R)-5,10-methylene-5,6,7,8-tetrahydrofolate + NADH + H(+) = 5-methyluridine(54) in tRNA + (6S)-5,6,7,8-tetrahydrofolate + NAD(+). The catalysed reaction is uridine(54) in tRNA + (6R)-5,10-methylene-5,6,7,8-tetrahydrofolate + NADPH + H(+) = 5-methyluridine(54) in tRNA + (6S)-5,6,7,8-tetrahydrofolate + NADP(+). In terms of biological role, catalyzes the folate-dependent formation of 5-methyl-uridine at position 54 (M-5-U54) in all tRNAs. The protein is Methylenetetrahydrofolate--tRNA-(uracil-5-)-methyltransferase TrmFO of Natranaerobius thermophilus (strain ATCC BAA-1301 / DSM 18059 / JW/NM-WN-LF).